The chain runs to 602 residues: Glutamyl-tRNA(Gln) amidotransferase subunit B, mitochondrial (602 aa).

The protein belongs to the GatB/GatE family. GatB subfamily. Subunit of the heterotrimeric GatCAB amidotransferase (AdT) complex, composed of A, B and C subunits.

The protein localises to the mitochondrion. It catalyses the reaction L-glutamyl-tRNA(Gln) + L-glutamine + ATP + H2O = L-glutaminyl-tRNA(Gln) + L-glutamate + ADP + phosphate + H(+). Its function is as follows. Allows the formation of correctly charged Gln-tRNA(Gln) through the transamidation of misacylated Glu-tRNA(Gln) in the mitochondria. The reaction takes place in the presence of glutamine and ATP through an activated gamma-phospho-Glu-tRNA(Gln). The sequence is that of Glutamyl-tRNA(Gln) amidotransferase subunit B, mitochondrial from Paracoccidioides lutzii (strain ATCC MYA-826 / Pb01) (Paracoccidioides brasiliensis).